Here is a 154-residue protein sequence, read N- to C-terminus: Ribonuclease HI (154 aa).

The region spanning 1-142 is the RNase H type-1 domain; the sequence is MQKQIEIFTD…CDQLAKAGAE (142 aa). Positions 10, 48, 70, and 134 each coordinate Mg(2+).

This sequence belongs to the RNase H family. As to quaternary structure, monomer. Mg(2+) is required as a cofactor.

The protein localises to the cytoplasm. It catalyses the reaction Endonucleolytic cleavage to 5'-phosphomonoester.. Its function is as follows. Endonuclease that specifically degrades the RNA of RNA-DNA hybrids. The protein is Ribonuclease HI (rnhA) of Pasteurella multocida (strain Pm70).